Reading from the N-terminus, the 231-residue chain is Protein INCA1 (231 aa).

The segment at 75–99 is interaction with CCNA1 and CCNA1/CDK2 complex; essential for CDK2 inhibitory activity; it reads SLHPLEGLPPPEKLWRRKRKKLHLE. Positions 90-95 match the Nuclear localization signal motif; sequence RRKRKK. Thr-180 is modified (phosphothreonine).

Belongs to the INCA family. Interacts with CCNA1. Identified in a complex with CCNA1 and CDK2. Interacts with ZNF16; the interaction inhibits INCA1 activity and induces the cell cycle process. Interacts with SPACA9. Interacts with CCNA2, CCNB1 and CCNE1. Interacts with the CCNA1/CDK2 complex. Interacts with ING5, DAZAP2, RNF26, USP15, SPOUT1, DPH7, TRIM26 and RAB5C. In terms of processing, phosphorylated when part of a complex with CCNA1 and CDK2.

It is found in the nucleus. Its subcellular location is the cytoplasm. Functionally, binds to CDK2-bound cyclins and inhibits the kinase activity of CDK2; binding to cyclins is critical for its function as CDK inhibitor. Inhibits cell growth and proliferation and may play a role in cell cycle control. Required for ING5-mediated regulation of S-phase progression, enhancement of Fas-induced apoptosis and inhibition of cell growth. The protein is Protein INCA1 (Inca1) of Mus musculus (Mouse).